Consider the following 957-residue polypeptide: Glycine dehydrogenase (decarboxylating) (957 aa).

Lys-708 is modified (N6-(pyridoxal phosphate)lysine).

The protein belongs to the GcvP family. As to quaternary structure, the glycine cleavage system is composed of four proteins: P, T, L and H. The cofactor is pyridoxal 5'-phosphate.

It catalyses the reaction N(6)-[(R)-lipoyl]-L-lysyl-[glycine-cleavage complex H protein] + glycine + H(+) = N(6)-[(R)-S(8)-aminomethyldihydrolipoyl]-L-lysyl-[glycine-cleavage complex H protein] + CO2. Its function is as follows. The glycine cleavage system catalyzes the degradation of glycine. The P protein binds the alpha-amino group of glycine through its pyridoxal phosphate cofactor; CO(2) is released and the remaining methylamine moiety is then transferred to the lipoamide cofactor of the H protein. The sequence is that of Glycine dehydrogenase (decarboxylating) from Escherichia fergusonii (strain ATCC 35469 / DSM 13698 / CCUG 18766 / IAM 14443 / JCM 21226 / LMG 7866 / NBRC 102419 / NCTC 12128 / CDC 0568-73).